Consider the following 233-residue polypeptide: MTFAAAQATYVLHSRPYKETSALVDFFTAQGRLRAVLRGARGKAGALARPFVPLEAEWRGRGELKTVARLESAGIPNLLSGQALFSGLYLNELLIRLLPAEDPQPEIFAHYAATLPLLAAGRPLEPLLRAFEWRLLEQLGYGFALDVDIHGRPIEPQALYQLLPEAGLEPVTQLQPGLFQGVELLSMADADWSAPGALAAAKRLMRQALAPHLGGRPLVSRELFMNRKESPRD.

The protein belongs to the RecO family.

Its function is as follows. Involved in DNA repair and RecF pathway recombination. This is DNA repair protein RecO from Pseudomonas paraeruginosa (strain DSM 24068 / PA7) (Pseudomonas aeruginosa (strain PA7)).